A 340-amino-acid polypeptide reads, in one-letter code: Farnesyl pyrophosphate synthase 1 (340 aa).

Positions 47, 50, and 85 each coordinate isopentenyl diphosphate. 2 residues coordinate Mg(2+): D92 and D96. R101 is a dimethylallyl diphosphate binding site. Position 102 (R102) interacts with isopentenyl diphosphate. 5 residues coordinate dimethylallyl diphosphate: K188, T189, Q227, K244, and K253.

This sequence belongs to the FPP/GGPP synthase family. It depends on Mg(2+) as a cofactor. In terms of tissue distribution, mainly expressed in trichomes and flowers, and, to a lower extent, in leaves, roots and stems.

The protein localises to the cytoplasm. It localises to the nucleus. It catalyses the reaction isopentenyl diphosphate + dimethylallyl diphosphate = (2E)-geranyl diphosphate + diphosphate. The enzyme catalyses isopentenyl diphosphate + (2E)-geranyl diphosphate = (2E,6E)-farnesyl diphosphate + diphosphate. It participates in isoprenoid biosynthesis; farnesyl diphosphate biosynthesis; farnesyl diphosphate from geranyl diphosphate and isopentenyl diphosphate: step 1/1. The protein operates within sesquiterpene biosynthesis. It functions in the pathway isoprenoid biosynthesis; geranyl diphosphate biosynthesis; geranyl diphosphate from dimethylallyl diphosphate and isopentenyl diphosphate: step 1/1. In terms of biological role, catalyzes the sequential condensation of isopentenyl pyrophosphate with the allylic pyrophosphates, dimethylallyl pyrophosphate, and then with the resultant geranylpyrophosphate to the ultimate product farnesyl pyrophosphate. This Cannabis sativa (Hemp) protein is Farnesyl pyrophosphate synthase 1.